A 268-amino-acid polypeptide reads, in one-letter code: Pantothenate synthetase (268 aa).

An ATP-binding site is contributed by 18–25 (MGYLHEGH). Catalysis depends on His-25, which acts as the Proton donor. Gln-49 contacts (R)-pantoate. Gln-49 lines the beta-alanine pocket. ATP is bound at residue 135–138 (GQKD). Gln-141 contacts (R)-pantoate. ATP-binding positions include Ile-164 and 172–175 (LSSR).

This sequence belongs to the pantothenate synthetase family. In terms of assembly, homodimer.

Its subcellular location is the cytoplasm. It catalyses the reaction (R)-pantoate + beta-alanine + ATP = (R)-pantothenate + AMP + diphosphate + H(+). It functions in the pathway cofactor biosynthesis; (R)-pantothenate biosynthesis; (R)-pantothenate from (R)-pantoate and beta-alanine: step 1/1. In terms of biological role, catalyzes the condensation of pantoate with beta-alanine in an ATP-dependent reaction via a pantoyl-adenylate intermediate. This Dehalococcoides mccartyi (strain CBDB1) protein is Pantothenate synthetase.